Consider the following 264-residue polypeptide: Undecaprenyl-diphosphatase (264 aa).

The next 8 membrane-spanning stretches (helical) occupy residues 7–27 (IVIP…PVSS), 45–65 (TKIL…LFFY), 86–106 (IHVL…YNKI), 109–129 (LFNP…LIIA), 145–165 (INLV…YPGF), 186–206 (VNFS…LDLI), 215–235 (LNIP…FLLI), and 244–264 (KVSL…IYFI).

The protein belongs to the UppP family.

The protein localises to the cell membrane. It catalyses the reaction di-trans,octa-cis-undecaprenyl diphosphate + H2O = di-trans,octa-cis-undecaprenyl phosphate + phosphate + H(+). Catalyzes the dephosphorylation of undecaprenyl diphosphate (UPP). Confers resistance to bacitracin. This Buchnera aphidicola subsp. Schizaphis graminum (strain Sg) protein is Undecaprenyl-diphosphatase.